The following is a 31-amino-acid chain: Potassium channel toxin alpha-KTx 5.5 (31 aa).

3 cysteine pairs are disulfide-bonded: cysteine 3-cysteine 21, cysteine 8-cysteine 26, and cysteine 12-cysteine 28. The interval 6–9 (RRCE) is [R/K]XCQ motif. A Histidine amide modification is found at histidine 31.

Expressed by the venom gland.

Its subcellular location is the secreted. In terms of biological role, blocks small conductance calcium-activated potassium channels. This Hottentotta tamulus (Eastern Indian scorpion) protein is Potassium channel toxin alpha-KTx 5.5.